Here is a 328-residue protein sequence, read N- to C-terminus: DNA polymerase III subunit delta' (328 aa).

DNA polymerase III contains a core (composed of alpha, epsilon and theta chains) that associates with a tau subunit. This core dimerizes to form the POLIII' complex. PolIII' associates with the gamma complex (composed of gamma, delta, delta', psi and chi chains) and with the beta chain to form the complete DNA polymerase III complex.

The catalysed reaction is DNA(n) + a 2'-deoxyribonucleoside 5'-triphosphate = DNA(n+1) + diphosphate. DNA polymerase III is a complex, multichain enzyme responsible for most of the replicative synthesis in bacteria. This DNA polymerase also exhibits 3' to 5' exonuclease activity. The sequence is that of DNA polymerase III subunit delta' (holB) from Buchnera aphidicola subsp. Schizaphis graminum (strain Sg).